Here is a 353-residue protein sequence, read N- to C-terminus: Polyprenal reductase 2 (353 aa).

The next 6 helical transmembrane spans lie at Pro11–Ile31, Phe78–Phe98, Met175–Ala195, Pro234–Leu254, Tyr291–Glu308, and Trp313–Leu335.

This sequence belongs to the steroid 5-alpha reductase family. Polyprenal reductase subfamily.

The protein localises to the cell membrane. It catalyses the reaction a di-trans,poly-cis-dolichal + NADP(+) = a di-trans,poly-cis-polyprenal + NADPH + H(+). It functions in the pathway protein modification; protein glycosylation. In terms of biological role, plays a key role in early steps of protein N-linked glycosylation by being involved in the conversion of polyprenol into dolichol. Acts as a polyprenal reductase that mediates the reduction of polyprenal into dolichal in a NADP-dependent mechanism. Dolichols are required for the synthesis of dolichol-linked monosaccharides and the oligosaccharide precursor used for N-glycosylation. This Oryza sativa subsp. indica (Rice) protein is Polyprenal reductase 2.